Reading from the N-terminus, the 425-residue chain is Serine--tRNA ligase (425 aa).

Residue 231–233 (TAE) coordinates L-serine. Position 262 to 264 (262 to 264 (RSE)) interacts with ATP. Position 285 (Glu-285) interacts with L-serine. ATP is bound at residue 349–352 (EISS). Ser-385 provides a ligand contact to L-serine.

The protein belongs to the class-II aminoacyl-tRNA synthetase family. Type-1 seryl-tRNA synthetase subfamily. Homodimer. The tRNA molecule binds across the dimer.

It localises to the cytoplasm. It catalyses the reaction tRNA(Ser) + L-serine + ATP = L-seryl-tRNA(Ser) + AMP + diphosphate + H(+). It carries out the reaction tRNA(Sec) + L-serine + ATP = L-seryl-tRNA(Sec) + AMP + diphosphate + H(+). The protein operates within aminoacyl-tRNA biosynthesis; selenocysteinyl-tRNA(Sec) biosynthesis; L-seryl-tRNA(Sec) from L-serine and tRNA(Sec): step 1/1. Catalyzes the attachment of serine to tRNA(Ser). Is also able to aminoacylate tRNA(Sec) with serine, to form the misacylated tRNA L-seryl-tRNA(Sec), which will be further converted into selenocysteinyl-tRNA(Sec). The sequence is that of Serine--tRNA ligase from Desulfosudis oleivorans (strain DSM 6200 / JCM 39069 / Hxd3) (Desulfococcus oleovorans).